The following is a 158-amino-acid chain: Cyclic pyranopterin monophosphate synthase (158 aa).

Substrate-binding positions include 75–77 and 113–114; these read LCH and ME. D128 is an active-site residue.

This sequence belongs to the MoaC family. In terms of assembly, homohexamer; trimer of dimers.

The enzyme catalyses (8S)-3',8-cyclo-7,8-dihydroguanosine 5'-triphosphate = cyclic pyranopterin phosphate + diphosphate. It participates in cofactor biosynthesis; molybdopterin biosynthesis. Functionally, catalyzes the conversion of (8S)-3',8-cyclo-7,8-dihydroguanosine 5'-triphosphate to cyclic pyranopterin monophosphate (cPMP). The sequence is that of Cyclic pyranopterin monophosphate synthase from Paraburkholderia phytofirmans (strain DSM 17436 / LMG 22146 / PsJN) (Burkholderia phytofirmans).